The chain runs to 356 residues: Phosphoribosyl pyrophosphate synthase-associated protein 1 (356 aa).

Met-1 is modified (N-acetylmethionine). 2 positions are modified to phosphoserine: Ser-177 and Ser-215.

It belongs to the ribose-phosphate pyrophosphokinase family. Binds to PRPS1 and PRPS2.

Functionally, seems to play a negative regulatory role in 5-phosphoribose 1-diphosphate synthesis. The chain is Phosphoribosyl pyrophosphate synthase-associated protein 1 (Prpsap1) from Mus musculus (Mouse).